Consider the following 176-residue polypeptide: Sec-independent protein translocase protein TatB (176 aa).

Residues 1-21 (MLDLGLSKMALIGVVALVVLG) form a helical membrane-spanning segment. Residues 155–176 (QSGAARVARHQPASLRRPTRFL) form a disordered region.

It belongs to the TatB family. In terms of assembly, the Tat system comprises two distinct complexes: a TatABC complex, containing multiple copies of TatA, TatB and TatC subunits, and a separate TatA complex, containing only TatA subunits. Substrates initially bind to the TatABC complex, which probably triggers association of the separate TatA complex to form the active translocon.

The protein resides in the cell inner membrane. Functionally, part of the twin-arginine translocation (Tat) system that transports large folded proteins containing a characteristic twin-arginine motif in their signal peptide across membranes. Together with TatC, TatB is part of a receptor directly interacting with Tat signal peptides. TatB may form an oligomeric binding site that transiently accommodates folded Tat precursor proteins before their translocation. This Burkholderia ambifaria (strain ATCC BAA-244 / DSM 16087 / CCUG 44356 / LMG 19182 / AMMD) (Burkholderia cepacia (strain AMMD)) protein is Sec-independent protein translocase protein TatB.